A 209-amino-acid polypeptide reads, in one-letter code: Large ribosomal subunit protein uL4 (209 aa).

The disordered stretch occupies residues 46-76 (RGTASTKTRGEVSGGGRKPWRQKGTGRARHG). A compositionally biased stretch (basic residues) spans 63 to 76 (KPWRQKGTGRARHG).

The protein belongs to the universal ribosomal protein uL4 family. As to quaternary structure, part of the 50S ribosomal subunit.

In terms of biological role, one of the primary rRNA binding proteins, this protein initially binds near the 5'-end of the 23S rRNA. It is important during the early stages of 50S assembly. It makes multiple contacts with different domains of the 23S rRNA in the assembled 50S subunit and ribosome. Its function is as follows. Forms part of the polypeptide exit tunnel. The chain is Large ribosomal subunit protein uL4 from Halothermothrix orenii (strain H 168 / OCM 544 / DSM 9562).